The primary structure comprises 63 residues: Large ribosomal subunit protein bL35 (63 aa).

Belongs to the bacterial ribosomal protein bL35 family.

In Sulfurovum sp. (strain NBC37-1), this protein is Large ribosomal subunit protein bL35.